A 245-amino-acid polypeptide reads, in one-letter code: 1-(5-phosphoribosyl)-5-[(5-phosphoribosylamino)methylideneamino] imidazole-4-carboxamide isomerase (245 aa).

Catalysis depends on Asp-8, which acts as the Proton acceptor. The active-site Proton donor is the Asp-129.

The protein belongs to the HisA/HisF family.

Its subcellular location is the cytoplasm. It carries out the reaction 1-(5-phospho-beta-D-ribosyl)-5-[(5-phospho-beta-D-ribosylamino)methylideneamino]imidazole-4-carboxamide = 5-[(5-phospho-1-deoxy-D-ribulos-1-ylimino)methylamino]-1-(5-phospho-beta-D-ribosyl)imidazole-4-carboxamide. Its pathway is amino-acid biosynthesis; L-histidine biosynthesis; L-histidine from 5-phospho-alpha-D-ribose 1-diphosphate: step 4/9. The sequence is that of 1-(5-phosphoribosyl)-5-[(5-phosphoribosylamino)methylideneamino] imidazole-4-carboxamide isomerase from Trichlorobacter lovleyi (strain ATCC BAA-1151 / DSM 17278 / SZ) (Geobacter lovleyi).